A 475-amino-acid chain; its full sequence is UDP-N-acetylmuramate--L-alanine ligase (475 aa).

118–124 (GTHGKTT) lines the ATP pocket.

This sequence belongs to the MurCDEF family.

It localises to the cytoplasm. It catalyses the reaction UDP-N-acetyl-alpha-D-muramate + L-alanine + ATP = UDP-N-acetyl-alpha-D-muramoyl-L-alanine + ADP + phosphate + H(+). Its pathway is cell wall biogenesis; peptidoglycan biosynthesis. Its function is as follows. Cell wall formation. The chain is UDP-N-acetylmuramate--L-alanine ligase from Thermosynechococcus vestitus (strain NIES-2133 / IAM M-273 / BP-1).